A 92-amino-acid polypeptide reads, in one-letter code: LYR motif-containing protein 4A (92 aa).

Belongs to the complex I LYR family.

The chain is LYR motif-containing protein 4A (lyrm4a) from Salmo salar (Atlantic salmon).